Consider the following 105-residue polypeptide: ATP-dependent Clp protease adapter protein ClpS (105 aa).

The protein belongs to the ClpS family. In terms of assembly, binds to the N-terminal domain of the chaperone ClpA.

Involved in the modulation of the specificity of the ClpAP-mediated ATP-dependent protein degradation. This Streptomyces avermitilis (strain ATCC 31267 / DSM 46492 / JCM 5070 / NBRC 14893 / NCIMB 12804 / NRRL 8165 / MA-4680) protein is ATP-dependent Clp protease adapter protein ClpS.